The primary structure comprises 1209 residues: Limbin (1209 aa).

Residues 1–200 (MKFSKEIEVF…VLPNHGLHAA (200 aa)) lie on the Extracellular side of the membrane. N-linked (GlcNAc...) asparagine glycosylation is present at Asn120. The helical transmembrane segment at 201-221 (GFCVAFILSLVLTWAVLFFMV) threads the bilayer. The Cytoplasmic segment spans residues 222–1209 (RYQCVKGSSL…KKAAWALGLN (988 aa)). 3 coiled-coil regions span residues 355–394 (TAEC…SAVE), 553–697 (KQKL…EERD), and 920–1012 (ELQE…METD). A compositionally biased stretch (basic and acidic residues) spans 689-700 (ERLEGEERDRGQ). The interval 689–714 (ERLEGEERDRGQEGVQSVRQRLKDDA) is disordered.

Component of the EvC complex composed of EFCAB7, IQCE, EVC2 and EVC; built from two subcomplexes, EVC2:EVC and EFCAB7:IQCE. Interacts with EVC. Interacts (via N-terminal end) with EFCAB7. Interacts (via N-terminal end) with IQCE.

The protein resides in the cell membrane. It localises to the cytoplasm. It is found in the cytoskeleton. Its subcellular location is the cilium basal body. The protein localises to the cell projection. The protein resides in the cilium. It localises to the cilium membrane. It is found in the nucleus. Its function is as follows. Component of the EvC complex that positively regulates ciliary Hedgehog (Hh) signaling. Plays a critical role in bone formation and skeletal development. May be involved in early embryonic morphogenesis. This chain is Limbin (EVC2), found in Bos taurus (Bovine).